We begin with the raw amino-acid sequence, 352 residues long: 4-hydroxy-2-oxovalerate aldolase (352 aa).

One can recognise a Pyruvate carboxyltransferase domain in the interval 13 to 265 (VRLTDTSLRD…KTGIDFFDIA (253 aa)). 21–22 (RD) contacts substrate. Mn(2+) is bound at residue aspartate 22. Catalysis depends on histidine 25, which acts as the Proton acceptor. The substrate site is built by serine 175 and histidine 204. Residues histidine 204 and histidine 206 each contribute to the Mn(2+) site. A substrate-binding site is contributed by tyrosine 295.

Belongs to the 4-hydroxy-2-oxovalerate aldolase family.

It catalyses the reaction (S)-4-hydroxy-2-oxopentanoate = acetaldehyde + pyruvate. The protein is 4-hydroxy-2-oxovalerate aldolase of Mycobacterium avium (strain 104).